A 506-amino-acid chain; its full sequence is Deoxyribodipyrimidine photo-lyase (506 aa).

Pro residues predominate over residues 1–21 (MPPTSVSPPRTAPGPANPSPA). The disordered stretch occupies residues 1 to 33 (MPPTSVSPPRTAPGPANPSPAHPSRVRVIHPGG). Residues 38 to 171 (GPVVYWMLRD…AVHQVDAHNV (134 aa)) enclose the Photolyase/cryptochrome alpha/beta domain. FAD-binding positions include Tyr268 and 282–285 (SGLS). Ser312 carries the phosphoserine modification. Residues 319–327 (ELVVRRELA), Lys390, Asn421, Asp427, and 427–429 (DGR) each bind FAD. The tract at residues 487–506 (KKRNAEESPNPVVKLSKSQH) is disordered.

The protein belongs to the DNA photolyase class-2 family. FAD is required as a cofactor. As to expression, expressed in proliferating tissues. Highly expressed in roots and shoot apical meristem (SAM). Expressed in leaves, flag leaves, and panicle.

It is found in the nucleus. It carries out the reaction cyclobutadipyrimidine (in DNA) = 2 pyrimidine residues (in DNA).. Its function is as follows. Involved in repair of UV radiation-induced DNA damage. Catalyzes the light-dependent monomerization (300-600 nm) of cyclobutylpyrimidine dimers (CPDs), which are formed between adjacent bases on the same DNA strand upon exposure to ultraviolet radiation. Required for plant survival in the presence of UV-B light. Not involved in the repair of (6-4) photoproducts. The polypeptide is Deoxyribodipyrimidine photo-lyase (PHR) (Oryza sativa subsp. japonica (Rice)).